The following is a 120-amino-acid chain: Large ribosomal subunit protein uL24 (120 aa).

Belongs to the universal ribosomal protein uL24 family. Part of the 50S ribosomal subunit.

One of two assembly initiator proteins, it binds directly to the 5'-end of the 23S rRNA, where it nucleates assembly of the 50S subunit. In terms of biological role, one of the proteins that surrounds the polypeptide exit tunnel on the outside of the subunit. The sequence is that of Large ribosomal subunit protein uL24 from Pseudarthrobacter chlorophenolicus (strain ATCC 700700 / DSM 12829 / CIP 107037 / JCM 12360 / KCTC 9906 / NCIMB 13794 / A6) (Arthrobacter chlorophenolicus).